Consider the following 34-residue polypeptide: Photosystem II reaction center protein Psb30 (34 aa).

Residues V6–L26 traverse the membrane as a helical segment.

This sequence belongs to the Psb30/Ycf12 family. As to quaternary structure, PSII is composed of 1 copy each of membrane proteins PsbA, PsbB, PsbC, PsbD, PsbE, PsbF, PsbH, PsbI, PsbJ, PsbK, PsbL, PsbM, PsbT, PsbX, PsbY, PsbZ, Psb30/Ycf12, peripheral proteins of the oxygen-evolving complex and a large number of cofactors. It forms dimeric complexes.

It is found in the plastid. Its subcellular location is the chloroplast thylakoid membrane. A core subunit of photosystem II (PSII), probably helps stabilize the reaction center. The chain is Photosystem II reaction center protein Psb30 from Skeletonema costatum (Marine centric diatom).